Consider the following 129-residue polypeptide: Biogenesis of lysosome-related organelles complex 1 subunit CNL1 (129 aa).

The protein belongs to the BLOC1S4 family. As to quaternary structure, component of the biogenesis of lysosome-related organelles complex-1 (BLOC-1).

Its subcellular location is the cytoplasm. Functionally, component of the biogenesis of lysosome-related organelles complex-1 (BLOC-1), a complex that is involved in endosomal cargo sorting. This Eremothecium gossypii (strain ATCC 10895 / CBS 109.51 / FGSC 9923 / NRRL Y-1056) (Yeast) protein is Biogenesis of lysosome-related organelles complex 1 subunit CNL1 (CLN1).